The sequence spans 541 residues: Malate synthase (541 aa).

Arg169 serves as the catalytic Proton acceptor. Asp454 acts as the Proton donor in catalysis.

Belongs to the malate synthase family.

The protein resides in the cytoplasm. The enzyme catalyses glyoxylate + acetyl-CoA + H2O = (S)-malate + CoA + H(+). Its pathway is carbohydrate metabolism; glyoxylate cycle; (S)-malate from isocitrate: step 2/2. This Streptomyces clavuligerus protein is Malate synthase (aceB).